The chain runs to 162 residues: Globin CTT-VI (162 aa).

An N-terminal signal peptide occupies residues 1-15 (MKFLVLALCIAAASA). Residues 17 to 161 (VLTTEQADLV…TYAMLFSAMD (145 aa)) form the Globin domain. Residues histidine 75 and histidine 110 each contribute to the heme b site.

The protein belongs to the globin family. Homodimer.

The polypeptide is Globin CTT-VI (CTT-6) (Chironomus thummi thummi (Midge)).